A 963-amino-acid chain; its full sequence is Importin-13 (963 aa).

20 HEAT repeats span residues 24 to 54, 56 to 88, 95 to 135, 142 to 179, 194 to 231, 236 to 268, 276 to 325, 330 to 372, 375 to 438, 440 to 476, 487 to 522, 524 to 558, 562 to 600, 603 to 648, 676 to 716, 720 to 754, 761 to 803, 815 to 845, 860 to 893, and 897 to 931; these read ENVEKALHQLYYDPNIENKNLAQKWLMQAQV, PQAWHFSWQLLQPDKVPEIQYFGASALHIKISR, TDQY…LSMM, AVADMVRLFQAEDSPVDGQGRCLALLELLTVLPEEFQT, LAVECGAVFPLLEQLLQQPSSPSCVRQKVLKCFSSWVQ, LQDCEALIQAAFAALQDSELFDSSVEAIVNAIS, VNTL…ALLD, WQSF…DDIL, EAEK…YEML, AELLSNLYDKLGRLLTSSEEPYSWQHTEALLYGFQSI, VVPGLIGLIPRISISNVQLADTVMFTIGALSEWLAD, PVMINSVLPLVLHALGNPELSVSSVSTLKKICREC, LPPYAANIVAVSQDVLMKQIHKTSQCMWLMQALGFLLSA, VEEI…SNLF, PVVV…VKTL, FAPMVPQLCEMLGRMYSTIPQASALDLTRQLVHIF, FPPI…ALKR, VKAVFQCAVLALKFPEAPTVKASCGFFTELL, EDGRMLLIAVLEAIGGQASRSLMDCFADILFALN, and FSLLSMWIKEALQPPGFPSARLSPEQKDTFSQQIL. Residues 45-111 enclose the Importin N-terminal domain; it reads AQKWLMQAQV…KAQLFTQITR (67 aa).

It belongs to the importin beta family. As to quaternary structure, interacts with UBC9, RAN, RBM8A, eIF-1A and PAX6. Expressed in fetal brain, heart, intestine and kidney.

The protein localises to the cytoplasm. It is found in the nucleus. Functionally, functions in nuclear protein import as nuclear transport receptor. Serves as receptor for nuclear localization signals (NLS) in cargo substrates. Is thought to mediate docking of the importin/substrate complex to the nuclear pore complex (NPC) through binding to nucleoporin and the complex is subsequently translocated through the pore by an energy requiring, Ran-dependent mechanism. At the nucleoplasmic side of the NPC, Ran binds to the importin, the importin/substrate complex dissociates and importin is re-exported from the nucleus to the cytoplasm where GTP hydrolysis releases Ran. The directionality of nuclear import is thought to be conferred by an asymmetric distribution of the GTP- and GDP-bound forms of Ran between the cytoplasm and nucleus. Mediates the nuclear import of UBC9, the RBM8A/MAGOH complex, PAX6 and probably other members of the paired homeobox family. Also mediates nuclear export of eIF-1A, and the cytoplasmic release of eIF-1A is triggered by the loading of import substrates onto IPO13. The chain is Importin-13 (IPO13) from Homo sapiens (Human).